Reading from the N-terminus, the 70-residue chain is uncharacterized protein (70 aa).

A helical membrane pass occupies residues 15-37 (LLVSSISESAVALIIITIRILFS).

Its subcellular location is the membrane. This is an uncharacterized protein from Saccharomyces cerevisiae (strain ATCC 204508 / S288c) (Baker's yeast).